The following is a 438-amino-acid chain: Trigger factor (438 aa).

In terms of domain architecture, PPIase FKBP-type spans 170–255 (GDTVVIDFDG…IHELKKLETP (86 aa)).

The protein belongs to the FKBP-type PPIase family. Tig subfamily.

It is found in the cytoplasm. The enzyme catalyses [protein]-peptidylproline (omega=180) = [protein]-peptidylproline (omega=0). In terms of biological role, involved in protein export. Acts as a chaperone by maintaining the newly synthesized protein in an open conformation. Functions as a peptidyl-prolyl cis-trans isomerase. This Oenococcus oeni (Leuconostoc oenos) protein is Trigger factor (tig).